The chain runs to 406 residues: Elongation factor Tu-B (406 aa).

Residues 10–215 (KPHVNVGTIG…AIDEYIPTPV (206 aa)) form the tr-type G domain. Residues 19 to 26 (GHVDHGKT) are G1. GTP is bound at residue 19 to 26 (GHVDHGKT). Threonine 26 contacts Mg(2+). The G2 stretch occupies residues 61–65 (GITIN). A G3 region spans residues 82-85 (DCPG). Residues 82–86 (DCPGH) and 137–140 (NKVD) contribute to the GTP site. The segment at 137–140 (NKVD) is G4. A G5 region spans residues 175–177 (SAL). At threonine 395 the chain carries Phosphothreonine.

It belongs to the TRAFAC class translation factor GTPase superfamily. Classic translation factor GTPase family. EF-Tu/EF-1A subfamily. In terms of assembly, monomer. In terms of processing, phosphorylated on a threonine.

The protein localises to the cytoplasm. The enzyme catalyses GTP + H2O = GDP + phosphate + H(+). Functionally, GTP hydrolase that promotes the GTP-dependent binding of aminoacyl-tRNA to the A-site of ribosomes during protein biosynthesis. Protects glycyl-tRNA(Gly) from hydrolysis by E.coli D-aminoacyl-tRNA deacylase (dtd). This is Elongation factor Tu-B from Thermus thermophilus (strain ATCC 27634 / DSM 579 / HB8).